Here is a 443-residue protein sequence, read N- to C-terminus: 3-phosphoshikimate 1-carboxyvinyltransferase (443 aa).

Positions 1–25 are disordered; sequence MSHSAEPLPMTARRSGPLTGEAQVP. 3-phosphoshikimate is bound by residues Lys-28, Ser-29, and Arg-33. Residue Lys-28 participates in phosphoenolpyruvate binding. Phosphoenolpyruvate is bound by residues Gly-101 and Arg-129. Ser-174, Gln-176, Asp-326, and Lys-353 together coordinate 3-phosphoshikimate. Phosphoenolpyruvate is bound at residue Gln-176. The Proton acceptor role is filled by Asp-326. 2 residues coordinate phosphoenolpyruvate: Arg-357 and Arg-400.

This sequence belongs to the EPSP synthase family. In terms of assembly, monomer.

The protein resides in the cytoplasm. The catalysed reaction is 3-phosphoshikimate + phosphoenolpyruvate = 5-O-(1-carboxyvinyl)-3-phosphoshikimate + phosphate. It participates in metabolic intermediate biosynthesis; chorismate biosynthesis; chorismate from D-erythrose 4-phosphate and phosphoenolpyruvate: step 6/7. In terms of biological role, catalyzes the transfer of the enolpyruvyl moiety of phosphoenolpyruvate (PEP) to the 5-hydroxyl of shikimate-3-phosphate (S3P) to produce enolpyruvyl shikimate-3-phosphate and inorganic phosphate. The polypeptide is 3-phosphoshikimate 1-carboxyvinyltransferase (Paracoccus denitrificans (strain Pd 1222)).